Here is a 116-residue protein sequence, read N- to C-terminus: Methionine-R-sulfoxide reductase B1 (116 aa).

The region spanning 1–106 is the MsrB domain; it reads MSFCSFFGGE…FSSSLKFVPK (106 aa). 4 residues coordinate Zn(2+): C23, C26, C71, and C74. Catalysis depends on U95, which acts as the Nucleophile. Residue U95 is a non-standard amino acid, selenocysteine.

It belongs to the MsrB Met sulfoxide reductase family. The cofactor is Zn(2+). In terms of processing, truncated MSRB1/SEPX1 proteins produced by failed UGA/Sec decoding are ubiquitinated by some Cul2-RING E3 ubiquitin-protein ligase complexes (containing either PRAME, PRAMF6, PRAMF9 or FEM1C as substrate-recognition component).

The protein localises to the cytoplasm. The protein resides in the nucleus. It is found in the cytoskeleton. It catalyses the reaction L-methionyl-[protein] + [thioredoxin]-disulfide + H2O = L-methionyl-(R)-S-oxide-[protein] + [thioredoxin]-dithiol. The catalysed reaction is [thioredoxin]-disulfide + L-methionine + H2O = L-methionine (R)-S-oxide + [thioredoxin]-dithiol. Functionally, methionine-sulfoxide reductase that specifically reduces methionine (R)-sulfoxide back to methionine. While in many cases, methionine oxidation is the result of random oxidation following oxidative stress, methionine oxidation is also a post-translational modification that takes place on specific residue. Acts as a regulator of actin assembly by reducing methionine (R)-sulfoxide mediated by MICALs (MICAL1, MICAL2 or MICAL3) on actin, thereby promoting filament repolymerization. Plays a role in innate immunity by reducing oxidized actin, leading to actin repolymerization in macrophages. This is Methionine-R-sulfoxide reductase B1 (MSRB1) from Homo sapiens (Human).